A 480-amino-acid chain; its full sequence is RAC-alpha serine/threonine-protein kinase (480 aa).

Positions 5-108 (AIVKEGWLHK…WTTAIQTVAD (104 aa)) constitute a PH domain. N6-acetyllysine is present on residues K14 and K20. 14–19 (KRGEYI) contributes to the 1D-myo-inositol 1,3,4,5-tetrakisphosphate binding site. 1D-myo-inositol 1,3,4,5-tetrakisphosphate is bound by residues 23 to 25 (RPR) and N53. A disulfide bridge links C60 with C77. R86 is a 1D-myo-inositol 1,3,4,5-tetrakisphosphate binding site. S124 is subject to Phosphoserine. The residue at position 129 (S129) is a Phosphoserine; alternate. S129 carries an O-linked (GlcNAc) serine; alternate glycan. The 259-residue stretch at 150 to 408 (FEYLKLLGKG…AKEIMQHRFF (259 aa)) folds into the Protein kinase domain. 156-164 (LGKGTFGKV) provides a ligand contact to ATP. Phosphotyrosine; by TNK2 is present on Y176. K179 contacts ATP. The active-site Proton acceptor is D274. K284 is covalently cross-linked (Glycyl lysine isopeptide (Lys-Gly) (interchain with G-Cter in ubiquitin)). C296 and C310 form a disulfide bridge. O-linked (GlcNAc) threonine glycosylation is present at T305. At T308 the chain carries Phosphothreonine; by PDPK1. O-linked (GlcNAc) threonine glycosylation occurs at T312. The 72-residue stretch at 409 to 480 (ASIVWQDVYE…QFSYSASATA (72 aa)) folds into the AGC-kinase C-terminal domain. Phosphothreonine is present on T448. Residue T450 is modified to Phosphothreonine; by MTOR. Residues 450–480 (TPPDQDDSMEGVDSERRPHFPQFSYSASATA) are disordered. O-linked (GlcNAc) serine; alternate glycosylation occurs at S473. S473 bears the Phosphoserine; by MTOR; alternate mark. Y474 is modified (phosphotyrosine). S477 carries the post-translational modification Phosphoserine. The residue at position 479 (T479) is a Phosphothreonine.

It belongs to the protein kinase superfamily. AGC Ser/Thr protein kinase family. RAC subfamily. In terms of assembly, interacts (via the C-terminus) with CCDC88A (via its C-terminus) and THEM4 (via its C-terminus). Interacts with AKTIP. Interacts (via PH domain) with MTCP1, TCL1A and TCL1B. Interacts with TRAF6. Interacts with GRB10; the interaction leads to GRB10 phosphorylation thus promoting YWHAE binding. Interacts with RARA; the interaction phosphorylates RARA and represses its transactivation activity. Interacts with MAP3K5 and TNK2. Interacts with BAD, CLK2, PPP2R5B, STK3 and STK4. Interacts (via PH domain) with SIRT1. Interacts with SRPK2 in a phosphorylation-dependent manner. Interacts with RAF1. Interacts with PKN2 (via C-terminal domain); the interaction occurs with the C-terminus cleavage products of PKN2 in apoptotic cells. Interacts with TRIM13; the interaction ubiquitinates AKT1 leading to its proteasomal degradation. Interacts with and phosphorylated by PDPK1. Interacts with BTBD10. Interacts with KCTD20. Interacts with PA2G4. Interacts with PA2G4. Interacts with KIF14; the interaction is detected in the plasma membrane upon INS stimulation and promotes AKT1 phosphorylation. Interacts with FAM83B; activates the PI3K/AKT signaling cascade. Interacts with WDFY2 (via WD repeats 1-3). Forms a complex with WDFY2 and FOXO1. Interacts with FAM168A. Interacts with SYAP1 (via phosphorylated form and BSD domain); this interaction is enhanced in a mTORC2-mediated manner in response to epidermal growth factor (EGF) stimulation and activates AKT1. Interacts with PKHM3. Interacts with FKBP5/FKBP51; promoting interaction between Akt/AKT1 and PHLPP1, thereby enhancing dephosphorylation and subsequent activation of Akt/AKT1. Interacts with TMEM175; leading to formation of the lysoK(GF) complex. Post-translationally, O-GlcNAcylation at Thr-305 and Thr-312 inhibits activating phosphorylation at Thr-308 via disrupting the interaction between AKT1 and PDPK1. O-GlcNAcylation at Ser-473 also probably interferes with phosphorylation at this site. Phosphorylation on Thr-308, Ser-473 and Tyr-474 is required for full activity. Phosphorylation of the activation loop at Thr-308 by PDPK1/PDK1 is a prerequisite for full activation. Phosphorylation by mTORC2 in response to growth factors plays a key role in AKT1 activation: mTORC2 phosphorylates different sites depending on the context, such as Thr-450, Ser-473, Ser-477 or Thr-479, thereby facilitating subsequent phosphorylation of the activation loop by PDPK1/PDK1. Phosphorylation at Ser-473 by mTORC2 promotes ubiquitination and degradation by the proteasome. Also phosphorylated at Ser-477 and Thr-479 by CDK2, facilitating subsequent phosphorylation of the activation loop by PDPK1/PDK1. Activated TNK2 phosphorylates it on Tyr-176 resulting in its binding to the anionic plasma membrane phospholipid PA. This phosphorylated form localizes to the cell membrane, where it is targeted by PDPK1 and PDPK2 for further phosphorylations on Thr-308 and Ser-473 leading to its activation. Phosphorylated at Thr-308 and Ser-473 by IKBKE and TBK1. Ser-473 phosphorylation is enhanced by interaction with AGAP2 isoform 2 (PIKE-A). Ser-473 phosphorylation is enhanced by signaling through activated FLT3. Ser-473 is dephosphorylated by PHLPP. Dephosphorylated at Thr-308 and Ser-473 by PP2A phosphatase. The phosphorylated form of PPP2R5B is required for bridging AKT1 with PP2A phosphatase. Ser-473 is dephosphorylated by CPPED1, leading to termination of signaling. AIM2 acts as an inhibitor of AKT1 by inhibiting phosphorylation Ser-473: AIM2 acts both by inhibiting the activity of PRKDC/DNA-PK kinase and promoting dephosphorylation by PP2A phosphatase. In terms of processing, ubiquitinated; undergoes both 'Lys-48'- and 'Lys-63'-linked polyubiquitination. TRAF6-induced 'Lys-63'-linked AKT1 ubiquitination is critical for phosphorylation and activation. When ubiquitinated, it translocates to the plasma membrane, where it becomes phosphorylated. When fully phosphorylated and translocated into the nucleus, undergoes 'Lys-48'-polyubiquitination catalyzed by TTC3, leading to its degradation by the proteasome. Ubiquitinated via 'Lys-48'-linked polyubiquitination by ZNRF1, leading to its degradation by the proteasome. Also ubiquitinated by TRIM13 leading to its proteasomal degradation. Phosphorylated, undergoes 'Lys-48'-linked polyubiquitination preferentially at Lys-284 catalyzed by MUL1, leading to its proteasomal degradation. Post-translationally, acetylated on Lys-14 and Lys-20 by the histone acetyltransferases EP300 and KAT2B. Acetylation results in reduced phosphorylation and inhibition of activity. Deacetylated at Lys-14 and Lys-20 by SIRT1. SIRT1-mediated deacetylation relieves the inhibition. Cleavage by caspase-3/CASP3. Cleaved at the caspase-3 consensus site Asp-462 during apoptosis, resulting in down-regulation of the AKT signaling pathway and decreased cell survival.

The protein resides in the cytoplasm. It localises to the nucleus. Its subcellular location is the cell membrane. It is found in the mitochondrion intermembrane space. The enzyme catalyses L-seryl-[protein] + ATP = O-phospho-L-seryl-[protein] + ADP + H(+). It catalyses the reaction L-threonyl-[protein] + ATP = O-phospho-L-threonyl-[protein] + ADP + H(+). AKT1 is one of 3 closely related serine/threonine-protein kinases (AKT1, AKT2 and AKT3) called the AKT kinase, and which regulate many processes including metabolism, proliferation, cell survival, growth and angiogenesis. This is mediated through serine and/or threonine phosphorylation of a range of downstream substrates. Over 100 substrate candidates have been reported so far, but for most of them, no isoform specificity has been reported. AKT is responsible of the regulation of glucose uptake by mediating insulin-induced translocation of the SLC2A4/GLUT4 glucose transporter to the cell surface. Phosphorylation of PTPN1 at 'Ser-50' negatively modulates its phosphatase activity preventing dephosphorylation of the insulin receptor and the attenuation of insulin signaling. Phosphorylation of TBC1D4 triggers the binding of this effector to inhibitory 14-3-3 proteins, which is required for insulin-stimulated glucose transport. AKT also regulates the storage of glucose in the form of glycogen by phosphorylating GSK3A at 'Ser-21' and GSK3B at 'Ser-9', resulting in inhibition of its kinase activity. Phosphorylation of GSK3 isoforms by AKT is also thought to be one mechanism by which cell proliferation is driven. AKT also regulates cell survival via the phosphorylation of MAP3K5 (apoptosis signal-related kinase). Phosphorylation of 'Ser-83' decreases MAP3K5 kinase activity stimulated by oxidative stress and thereby prevents apoptosis. AKT mediates insulin-stimulated protein synthesis by phosphorylating TSC2 at 'Ser-939' and 'Thr-1462', thereby activating the mTORC1 signaling pathway, and leading to both phosphorylation of 4E-BP1 and in activation of RPS6KB1. Also regulates the mTORC1 signaling pathway by catalyzing phosphorylation of CASTOR1 and DEPDC5. AKT plays a role as key modulator of the AKT-mTOR signaling pathway controlling the tempo of the process of newborn neurons integration during adult neurogenesis, including correct neuron positioning, dendritic development and synapse formation. Part of a positive feedback loop of mTORC2 signaling by mediating phosphorylation of MAPKAP1/SIN1, promoting mTORC2 activation. AKT is involved in the phosphorylation of members of the FOXO factors (Forkhead family of transcription factors), leading to binding of 14-3-3 proteins and cytoplasmic localization. In particular, FOXO1 is phosphorylated at 'Thr-24', 'Ser-256' and 'Ser-319'. FOXO3 and FOXO4 are phosphorylated on equivalent sites. AKT has an important role in the regulation of NF-kappa-B-dependent gene transcription and positively regulates the activity of CREB1 (cyclic AMP (cAMP)-response element binding protein). The phosphorylation of CREB1 induces the binding of accessory proteins that are necessary for the transcription of pro-survival genes such as BCL2 and MCL1. AKT phosphorylates 'Ser-454' on ATP citrate lyase (ACLY), thereby potentially regulating ACLY activity and fatty acid synthesis. Activates the 3B isoform of cyclic nucleotide phosphodiesterase (PDE3B) via phosphorylation of 'Ser-273', resulting in reduced cyclic AMP levels and inhibition of lipolysis. Phosphorylates PIKFYVE on 'Ser-318', which results in increased PI(3)P-5 activity. The Rho GTPase-activating protein DLC1 is another substrate and its phosphorylation is implicated in the regulation cell proliferation and cell growth. Signals downstream of phosphatidylinositol 3-kinase (PI(3)K) to mediate the effects of various growth factors such as platelet-derived growth factor (PDGF), epidermal growth factor (EGF), insulin and insulin-like growth factor 1 (IGF1). AKT mediates the antiapoptotic effects of IGF1. Essential for the SPATA13-mediated regulation of cell migration and adhesion assembly and disassembly. May be involved in the regulation of the placental development. Phosphorylates STK4/MST1 at 'Thr-120' and 'Thr-387' leading to inhibition of its: kinase activity, nuclear translocation, autophosphorylation and ability to phosphorylate FOXO3. Phosphorylates STK3/MST2 at 'Thr-117' and 'Thr-384' leading to inhibition of its: cleavage, kinase activity, autophosphorylation at Thr-180, binding to RASSF1 and nuclear translocation. Phosphorylates SRPK2 and enhances its kinase activity towards SRSF2 and ACIN1 and promotes its nuclear translocation. Phosphorylates RAF1 at 'Ser-259' and negatively regulates its activity. Phosphorylation of BAD stimulates its pro-apoptotic activity. Phosphorylates KAT6A at 'Thr-369' and this phosphorylation inhibits the interaction of KAT6A with PML and negatively regulates its acetylation activity towards p53/TP53. Phosphorylates palladin (PALLD), modulating cytoskeletal organization and cell motility. Phosphorylates prohibitin (PHB), playing an important role in cell metabolism and proliferation. Phosphorylates CDKN1A, for which phosphorylation at 'Thr-145' induces its release from CDK2 and cytoplasmic relocalization. These recent findings indicate that the AKT1 isoform has a more specific role in cell motility and proliferation. Phosphorylates CLK2 thereby controlling cell survival to ionizing radiation. Phosphorylates PCK1 at 'Ser-90', reducing the binding affinity of PCK1 to oxaloacetate and changing PCK1 into an atypical protein kinase activity using GTP as donor. Also acts as an activator of TMEM175 potassium channel activity in response to growth factors: forms the lysoK(GF) complex together with TMEM175 and acts by promoting TMEM175 channel activation, independently of its protein kinase activity. Acts as a negative regulator of the cGAS-STING pathway by mediating phosphorylation of CGAS during mitosis, leading to its inhibition. Acts as a regulator of mitochondrial calcium uptake by mediating phosphorylation of MICU1 in the mitochondrial intermembrane space, impairing MICU1 maturation. Acts as an inhibitor of tRNA methylation by mediating phosphorylation of the N-terminus of METTL1, thereby inhibiting METTL1 methyltransferase activity. In response to LPAR1 receptor pathway activation, phosphorylates Rabin8/RAB3IP which alters its activity and phosphorylates WDR44 which induces WDR44 binding to Rab11, thereby switching Rab11 vesicular function from preciliary trafficking to endocytic recycling. The chain is RAC-alpha serine/threonine-protein kinase (AKT1) from Bos taurus (Bovine).